A 265-amino-acid chain; its full sequence is MERGDQPKRTRNENIFNCLYKNPEATFKLICFPWMGGGSTHFAKWGQDTHDLLEVHSLRLPGRESRVEEPLENDISQLVDEVVCALQPVIQDKPFAFFGHSMGSYIAFRTALGLKENNQPEPLHLFLSSATPVHSKAWHRIPKDDELSEEQISHYLMEFGGTPKHFAEAKEFVKQCSPIIRADLNIVRSCTSNVPSKAVLSCDLTCFVGSEDIAKDMEAWKDVTSGNAKIYQLPGGHFYLLDPANEKLIKNYIIKCLEVSSISNF.

Position 1 is an N-acetylmethionine (Met1). Residues Ser101 and His237 contribute to the active site.

It belongs to the thioesterase family. In terms of assembly, interacts (via C-terminus) with FASN. Detected both in lactating and non-lactating breast epithelium (at protein level). Isoform 2 is up-regulated in bone marrow-derived mononuclear cells of rheumatoid arthritis patients.

It is found in the cytoplasm. It localises to the cytosol. It carries out the reaction (9Z)-octadecenoyl-[ACP] + H2O = (9Z)-octadecenoate + holo-[ACP] + H(+). The enzyme catalyses decanoyl-CoA + H2O = decanoate + CoA + H(+). The catalysed reaction is dodecanoyl-CoA + H2O = dodecanoate + CoA + H(+). It catalyses the reaction tetradecanoyl-CoA + H2O = tetradecanoate + CoA + H(+). It carries out the reaction hexadecanoyl-CoA + H2O = hexadecanoate + CoA + H(+). Its function is as follows. Contributes to the release of free fatty acids from fatty acid synthase (FASN). Has broad substrate specificity, giving rise to a range of free fatty acids with chain lengths between 10 and 16 carbon atoms (C10 - C16). This Homo sapiens (Human) protein is S-acyl fatty acid synthase thioesterase, medium chain.